Here is a 204-residue protein sequence, read N- to C-terminus: Phosphoribosyl-dephospho-CoA transferase (204 aa).

Catalysis depends on residues Asp-129 and Asp-131.

It belongs to the MdcG family.

It carries out the reaction apo-[malonate decarboxylase ACP] + 2'-(5''-triphospho-alpha-D-ribosyl)-3'-dephospho-CoA = holo-[malonate decarboxylase ACP] + diphosphate. Functionally, transfers 2'-(5-triphosphoribosyl)-3'-dephosphocoenzyme-A to the apo-[acyl-carrier-protein] of the malonate decarboxylase to yield holo-[acyl-carrier-protein]. This is Phosphoribosyl-dephospho-CoA transferase from Pseudomonas putida (strain GB-1).